The chain runs to 123 residues: NADH-quinone oxidoreductase subunit A (123 aa).

The next 3 helical transmembrane spans lie at 11–31, 68–88, and 93–113; these read YLPIAIFFGIAVLLSVLIMIL, LVAILFIIFDLEIAFLVPWAI, and IGKMGFFSMMFFLFVLIIGFI.

The protein belongs to the complex I subunit 3 family. NDH-1 is composed of 14 different subunits. Subunits NuoA, H, J, K, L, M, N constitute the membrane sector of the complex.

The protein resides in the cell inner membrane. It catalyses the reaction a quinone + NADH + 5 H(+)(in) = a quinol + NAD(+) + 4 H(+)(out). NDH-1 shuttles electrons from NADH, via FMN and iron-sulfur (Fe-S) centers, to quinones in the respiratory chain. The immediate electron acceptor for the enzyme in this species is believed to be ubiquinone. Couples the redox reaction to proton translocation (for every two electrons transferred, four hydrogen ions are translocated across the cytoplasmic membrane), and thus conserves the redox energy in a proton gradient. This chain is NADH-quinone oxidoreductase subunit A, found in Rickettsia prowazekii (strain Madrid E).